The primary structure comprises 87 residues: Cell division topological specificity factor (87 aa).

It belongs to the MinE family.

Prevents the cell division inhibition by proteins MinC and MinD at internal division sites while permitting inhibition at polar sites. This ensures cell division at the proper site by restricting the formation of a division septum at the midpoint of the long axis of the cell. In Blochmanniella pennsylvanica (strain BPEN), this protein is Cell division topological specificity factor.